The sequence spans 114 residues: UPF0342 protein PEPE_0673 (114 aa).

It belongs to the UPF0342 family.

The protein is UPF0342 protein PEPE_0673 of Pediococcus pentosaceus (strain ATCC 25745 / CCUG 21536 / LMG 10740 / 183-1w).